The sequence spans 493 residues: Guanosine-5'-triphosphate,3'-diphosphate pyrophosphatase (493 aa).

The protein belongs to the GppA/Ppx family. GppA subfamily.

It catalyses the reaction guanosine 3'-diphosphate 5'-triphosphate + H2O = guanosine 3',5'-bis(diphosphate) + phosphate + H(+). It participates in purine metabolism; ppGpp biosynthesis; ppGpp from GTP: step 2/2. Catalyzes the conversion of pppGpp to ppGpp. Guanosine pentaphosphate (pppGpp) is a cytoplasmic signaling molecule which together with ppGpp controls the 'stringent response', an adaptive process that allows bacteria to respond to amino acid starvation, resulting in the coordinated regulation of numerous cellular activities. The chain is Guanosine-5'-triphosphate,3'-diphosphate pyrophosphatase from Salmonella gallinarum (strain 287/91 / NCTC 13346).